Reading from the N-terminus, the 101-residue chain is Urease subunit beta (101 aa).

The protein belongs to the urease beta subunit family. Heterotrimer of UreA (gamma), UreB (beta) and UreC (alpha) subunits. Three heterotrimers associate to form the active enzyme.

It localises to the cytoplasm. The catalysed reaction is urea + 2 H2O + H(+) = hydrogencarbonate + 2 NH4(+). The protein operates within nitrogen metabolism; urea degradation; CO(2) and NH(3) from urea (urease route): step 1/1. In Pseudomonas fluorescens (strain SBW25), this protein is Urease subunit beta.